A 375-amino-acid polypeptide reads, in one-letter code: F420-dependent formate dehydrogenase 2 subunit beta (375 aa).

4Fe-4S ferredoxin-type domains follow at residues 268–291 and 320–349; these read PEPEKWDEYWSRCIKCYGCRDVCP and IRLSHMSFSCINCGQCEDVCPVEIPLAKIY. Residues cysteine 280, cysteine 283, cysteine 286, cysteine 290, cysteine 329, cysteine 332, cysteine 335, and cysteine 339 each coordinate [4Fe-4S] cluster.

It belongs to the FrhB family. Dimer of an alpha (FdhA2) and a beta (FdhB2) subunit. It depends on [4Fe-4S] cluster as a cofactor. The cofactor is FAD. Zn(2+) serves as cofactor.

The catalysed reaction is oxidized coenzyme F420-(gamma-L-Glu)(n) + formate + 2 H(+) = reduced coenzyme F420-(gamma-L-Glu)(n) + CO2. Functionally, catalyzes the oxidation of formate to carbon dioxide, with coenzyme F420 as the electron acceptor. In vitro can also use methyl viologen as electron acceptor. This Methanococcus maripaludis (strain DSM 14266 / JCM 13030 / NBRC 101832 / S2 / LL) protein is F420-dependent formate dehydrogenase 2 subunit beta.